Consider the following 193-residue polypeptide: Putative manganese efflux pump MntP (193 aa).

A run of 6 helical transmembrane segments spans residues 3 to 23, 37 to 57, 66 to 86, 109 to 131, 146 to 166, and 171 to 191; these read PLSI…AAIG, VRAG…GWML, AAFD…HMIV, LALA…SLAF, CTLS…ALIG, and ILGG…HLSG.

This sequence belongs to the MntP (TC 9.B.29) family.

The protein resides in the cell inner membrane. Functionally, probably functions as a manganese efflux pump. The sequence is that of Putative manganese efflux pump MntP from Xanthomonas campestris pv. campestris (strain 8004).